Here is a 279-residue protein sequence, read N- to C-terminus: Putative pyruvate, phosphate dikinase regulatory protein (279 aa).

152–159 (GVSRTSKS) is an ADP binding site.

It belongs to the pyruvate, phosphate/water dikinase regulatory protein family. PDRP subfamily.

The catalysed reaction is N(tele)-phospho-L-histidyl/L-threonyl-[pyruvate, phosphate dikinase] + ADP = N(tele)-phospho-L-histidyl/O-phospho-L-threonyl-[pyruvate, phosphate dikinase] + AMP + H(+). It carries out the reaction N(tele)-phospho-L-histidyl/O-phospho-L-threonyl-[pyruvate, phosphate dikinase] + phosphate + H(+) = N(tele)-phospho-L-histidyl/L-threonyl-[pyruvate, phosphate dikinase] + diphosphate. In terms of biological role, bifunctional serine/threonine kinase and phosphorylase involved in the regulation of the pyruvate, phosphate dikinase (PPDK) by catalyzing its phosphorylation/dephosphorylation. The sequence is that of Putative pyruvate, phosphate dikinase regulatory protein from Anaplasma marginale (strain St. Maries).